The primary structure comprises 89 residues: Small ribosomal subunit protein uS17 (89 aa).

Belongs to the universal ribosomal protein uS17 family. In terms of assembly, part of the 30S ribosomal subunit.

In terms of biological role, one of the primary rRNA binding proteins, it binds specifically to the 5'-end of 16S ribosomal RNA. This is Small ribosomal subunit protein uS17 from Albidiferax ferrireducens (strain ATCC BAA-621 / DSM 15236 / T118) (Rhodoferax ferrireducens).